The primary structure comprises 1030 residues: Putative pentatricopeptide repeat-containing protein At5g06400, mitochondrial (1030 aa).

A mitochondrion-targeting transit peptide spans 1-77; sequence MKALFRFKSC…VKLDETTRLR (77 aa). 19 PPR repeats span residues 188 to 222, 223 to 257, 258 to 292, 293 to 323, 328 to 362, 363 to 393, 397 to 431, 432 to 466, 467 to 501, 502 to 536, 677 to 711, 712 to 746, 747 to 783, 784 to 814, 818 to 852, 853 to 887, 888 to 922, 923 to 957, and 958 to 992; these read RVGI…GCDK, DIRT…GFEL, DATA…GITF, GLRT…MVRI, EHDA…EMCL, DAKY…MKRR, DSNV…GRPP, RVST…GIEP, DSVA…GIKP, TWKS…KIVI, NSEA…GCLI, TQDT…GLIP, SSST…GFVP, DREL…LGKI, VTVA…RSLL, DQYT…GTKP, GVHV…SCEP, SVVT…GTSP, and DFKT…GIAP.

It belongs to the PPR family. P subfamily.

It localises to the mitochondrion. The chain is Putative pentatricopeptide repeat-containing protein At5g06400, mitochondrial from Arabidopsis thaliana (Mouse-ear cress).